The following is a 339-amino-acid chain: Glyceraldehyde-3-phosphate dehydrogenase (339 aa).

Residues arginine 12–isoleucine 13, aspartate 39, arginine 84, and serine 127 contribute to the NAD(+) site. Residues serine 157–threonine 159, threonine 188, arginine 203, threonine 216–glycine 217, and arginine 239 each bind D-glyceraldehyde 3-phosphate. The active-site Nucleophile is cysteine 158. Residue asparagine 320 coordinates NAD(+).

It belongs to the glyceraldehyde-3-phosphate dehydrogenase family. As to quaternary structure, homotetramer.

The protein resides in the cytoplasm. The enzyme catalyses D-glyceraldehyde 3-phosphate + phosphate + NAD(+) = (2R)-3-phospho-glyceroyl phosphate + NADH + H(+). It participates in carbohydrate degradation; glycolysis; pyruvate from D-glyceraldehyde 3-phosphate: step 1/5. In terms of biological role, catalyzes the oxidative phosphorylation of glyceraldehyde 3-phosphate (G3P) to 1,3-bisphosphoglycerate (BPG) using the cofactor NAD. The first reaction step involves the formation of a hemiacetal intermediate between G3P and a cysteine residue, and this hemiacetal intermediate is then oxidized to a thioester, with concomitant reduction of NAD to NADH. The reduced NADH is then exchanged with the second NAD, and the thioester is attacked by a nucleophilic inorganic phosphate to produce BPG. The chain is Glyceraldehyde-3-phosphate dehydrogenase (gapA) from Mycobacterium leprae (strain TN).